Here is a 216-residue protein sequence, read N- to C-terminus: Probable transaldolase (216 aa).

Lysine 84 serves as the catalytic Schiff-base intermediate with substrate.

The protein belongs to the transaldolase family. Type 3B subfamily.

It localises to the cytoplasm. The enzyme catalyses D-sedoheptulose 7-phosphate + D-glyceraldehyde 3-phosphate = D-erythrose 4-phosphate + beta-D-fructose 6-phosphate. It functions in the pathway carbohydrate degradation; pentose phosphate pathway; D-glyceraldehyde 3-phosphate and beta-D-fructose 6-phosphate from D-ribose 5-phosphate and D-xylulose 5-phosphate (non-oxidative stage): step 2/3. Its function is as follows. Transaldolase is important for the balance of metabolites in the pentose-phosphate pathway. The protein is Probable transaldolase of Exiguobacterium sp. (strain ATCC BAA-1283 / AT1b).